The sequence spans 837 residues: Protein translocase subunit SecA (837 aa).

ATP contacts are provided by residues glutamine 83, 101 to 105 (GEGKT), and aspartate 494.

Belongs to the SecA family. As to quaternary structure, monomer and homodimer. Part of the essential Sec protein translocation apparatus which comprises SecA, SecYEG and auxiliary proteins SecDF. Other proteins may also be involved.

It is found in the cell membrane. Its subcellular location is the cytoplasm. It carries out the reaction ATP + H2O + cellular proteinSide 1 = ADP + phosphate + cellular proteinSide 2.. In terms of biological role, part of the Sec protein translocase complex. Interacts with the SecYEG preprotein conducting channel. Has a central role in coupling the hydrolysis of ATP to the transfer of proteins into and across the cell membrane, serving as an ATP-driven molecular motor driving the stepwise translocation of polypeptide chains across the membrane. The polypeptide is Protein translocase subunit SecA (Ureaplasma parvum serovar 3 (strain ATCC 27815 / 27 / NCTC 11736)).